The chain runs to 187 residues: Threonylcarbamoyl-AMP synthase (187 aa).

Positions 4–187 (NHTDDPFLLD…GHSGQTIRDN (184 aa)) constitute a YrdC-like domain. Positions 168 to 187 (GSRSPSKIRHGHSGQTIRDN) are disordered.

It belongs to the SUA5 family. TsaC subfamily.

It is found in the cytoplasm. It catalyses the reaction L-threonine + hydrogencarbonate + ATP = L-threonylcarbamoyladenylate + diphosphate + H2O. Its function is as follows. Required for the formation of a threonylcarbamoyl group on adenosine at position 37 (t(6)A37) in tRNAs that read codons beginning with adenine. Catalyzes the conversion of L-threonine, HCO(3)(-)/CO(2) and ATP to give threonylcarbamoyl-AMP (TC-AMP) as the acyladenylate intermediate, with the release of diphosphate. In Pseudoalteromonas atlantica (strain T6c / ATCC BAA-1087), this protein is Threonylcarbamoyl-AMP synthase.